An 816-amino-acid polypeptide reads, in one-letter code: Two pore channel protein 1 (816 aa).

Over 1-112 (MAVSLDDDVP…AHNHLFYLME (112 aa)) the chain is Cytoplasmic. Residues 17 to 64 (EGGSAPLAPSNGLGQEELPSKNGGSYAIHDSQAPSLSSGGESSPSSPA) are disordered. The segment covering 50–63 (PSLSSGGESSPSSP) has biased composition (low complexity). Residues 113–133 (LATALLLLLLSLCEAPAVPAL) traverse the membrane as a helical segment. Position 134 (Arg-134) is a topological domain, extracellular. A helical transmembrane segment spans residues 135 to 155 (LGIYVHATLELFALMVVVFEL). The Cytoplasmic portion of the chain corresponds to 156–177 (CMKLRWLGLHTFIRHKRTMVKT). A helical transmembrane segment spans residues 178-198 (SVLVVQFVEAIVVLVRQMSHV). The Extracellular portion of the chain corresponds to 199-200 (RV). The helical transmembrane segment at 201-220 (TRALRCIFLVDCRYCGGVRR) threads the bilayer. The Cytoplasmic portion of the chain corresponds to 221–234 (NLRQIFQSLPPFMD). The helical transmembrane segment at 235–255 (ILLLLLFFMIIFAILGFYLFS) threads the bilayer. At 256–262 (PNPSDPY) the chain is on the extracellular side. An intramembrane region (helical; Pore-forming) is located at residues 263-286 (FSTLENSIVSLFVLLTTANFPDVM). Residues 287–294 (MPSYSRNP) are Extracellular-facing. The helical transmembrane segment at 295 to 315 (WSCVFFIVYLSIELYFIMNLL) threads the bilayer. Topologically, residues 316–444 (LAVVFDTFND…NILVKSKAFQ (129 aa)) are cytoplasmic. A helical transmembrane segment spans residues 445 to 465 (YFMYLVVAVNGVWILVETFML). The Extracellular segment spans residues 466 to 479 (KGGNFFSKHVPWSY). A helical membrane pass occupies residues 480-500 (LVFLTIYGVELFLKVAGLGPV). Residues 501-503 (EYL) lie on the Cytoplasmic side of the membrane. A helical membrane pass occupies residues 504-526 (SSGWNLFDFSVTVFAFLGLLALA). At 527-534 (LNMEPFYF) the chain is on the extracellular side. The chain crosses the membrane as a helical span at residues 535-549 (IVVLRPLQLLRLFKL). The Cytoplasmic segment spans residues 550–573 (KERYRNVLDTMFELLPRMASLGLT). A helical membrane pass occupies residues 574–594 (LLIFYYSFAIVGMEFFCGIVF). Residues 595–629 (PNCCNTSTVADAYRWRNHTVGNRTVVEEGYYYLNN) lie on the Extracellular side of the membrane. N-linked (GlcNAc...) asparagine glycosylation is found at Asn-599, Asn-611, and Asn-616. An intramembrane region (helical; Pore-forming) is located at residues 630–653 (FDNILNSFVTLFELTVVNNWYIIM). Topologically, residues 654–670 (EGVTSQTSHWSRLYFMT) are extracellular. A helical membrane pass occupies residues 671-691 (FYIVTMVVMTIIVAFILEAFV). Residues 692–816 (FRMNYSRKNQ…GSRQRSQTVT (125 aa)) lie on the Cytoplasmic side of the membrane. Residues 769-796 (SLKMYQEEIQEWYEEHAREQEQQRQLSS) are a coiled coil. Residues 782-816 (EEHAREQEQQRQLSSSAAPAAQQPPGSRQRSQTVT) are disordered. Residues 791–816 (QRQLSSSAAPAAQQPPGSRQRSQTVT) are compositionally biased toward low complexity.

The protein belongs to the calcium channel alpha-1 subunit (TC 1.A.1.11) family. Two pore calcium channel subfamily. In terms of assembly, dimer. Interacts with MTOR; the interaction is required for TPCN1 ATP sensitivity. Interacts with STX7, STX8 and STX12. Interacts with JPT2. Found in a complex with LSM12, TPCN1 and TPCN2. N-glycosylated. In terms of tissue distribution, highest expression found in the heart and kidney, and lowest expression found in the spleen.

The protein resides in the lysosome membrane. The protein localises to the endosome membrane. It is found in the early endosome membrane. Its subcellular location is the recycling endosome membrane. It carries out the reaction Na(+)(in) = Na(+)(out). The catalysed reaction is Ca(2+)(in) = Ca(2+)(out). With respect to regulation, na(+) current is inhibited by ATP in a MTORC-dependent manner. ATP sensitivity is independent of PI(3,5)P2. Probably regulated by Mg(2+) ions, cytosolic Mg(2+) selectively inhibits outward current while lysosomal Mg(2+) modestly inhibits both the outward and inward currents. In the absence of Mg(2+), NAADP readily activates TPCN2, with properties similar to PI(3,5)P2. Both current elicited by PI(3,5)P2 as well as NAADP are inhibited by tetrandrine. Intracellular channel initially characterized as a non-selective Ca(2+)-permeable channel activated by NAADP (nicotinic acid adenine dinucleotide phosphate), it is also a voltage-gated highly-selective Na(+) channel activated directly by PI(3,5)P2 (phosphatidylinositol 3,5-bisphosphate) that senses pH changes and confers electrical excitability to organelles. Localizes to the early and recycling endosomes membranes where it plays a role in the uptake and processing of proteins and regulates organellar membrane excitability, membrane trafficking and pH homeostasis. Ion selectivity is not fixed but rather agonist-dependent and under defined ionic conditions, can be readily activated by both NAADP and PI(3,5)P2. Required for mTOR-dependent nutrient sensing. Its function is as follows. (Microbial infection) During Ebola virus (EBOV) infection, controls the movement of endosomes containing virus particles and is required by EBOV to escape from the endosomal network into the cell cytoplasm. The chain is Two pore channel protein 1 from Homo sapiens (Human).